Here is a 190-residue protein sequence, read N- to C-terminus: uncharacterized protein (190 aa).

Positions 1 to 18 (MKLVHMASGLAVAIALAA) are cleaved as a signal peptide. C19 is lipidated: N-palmitoyl cysteine. Residue C19 is the site of S-diacylglycerol cysteine attachment. Residues 162-182 (ASGGATTTVPSTSPTQVNPSS) show a composition bias toward low complexity. The segment at 162 to 190 (ASGGATTTVPSTSPTQVNPSSAVPAPTQY) is disordered.

Its subcellular location is the cell membrane. This is an uncharacterized protein from Escherichia coli (strain K12).